The sequence spans 357 residues: MYPLVRRLLFLIPPEHAHKLVFAVLRGVAAVAPVCRLLRRLLGPTDPVLASTVFGVRFPAPLGLAAGFDKDGTALSSWGAMGFGYAEIGTVTAHPQPGNPAPRLFRLADDRALLNRMGFNNHGARALAIRLARHRPEIPIGVNIGKTKKTPAGDAVNDYRASARMVGPLASYLVVNVSSPNTPGLRDLQAVESLRPILSAVRAETSTPVLVKIAPDLSDSDLDDIADLAVELDLAGIVATNTTVSRDGLTTPGVDRLGPGGISGPPLAQRAVQVLRRLYDRVGDRLALISVGGIETADDAWERITAGASLLQGYTGFIYGGERWAKDIHEGIARRLHDGGFGSLHEAVGSARRRQPS.

Residues 66–70 (AGFDK) and Thr90 contribute to the FMN site. Lys70 is a substrate binding site. Position 115–119 (115–119 (NRMGF)) interacts with substrate. FMN is bound by residues Asn143 and Asn176. Asn176 contributes to the substrate binding site. Ser179 acts as the Nucleophile in catalysis. Asn181 is a binding site for substrate. Positions 212 and 240 each coordinate FMN. 241 to 242 (NT) contributes to the substrate binding site. FMN contacts are provided by residues Gly264, Gly293, and 314 to 315 (YT).

This sequence belongs to the dihydroorotate dehydrogenase family. Type 2 subfamily. In terms of assembly, monomer. It depends on FMN as a cofactor.

It localises to the cell membrane. It carries out the reaction (S)-dihydroorotate + a quinone = orotate + a quinol. It functions in the pathway pyrimidine metabolism; UMP biosynthesis via de novo pathway; orotate from (S)-dihydroorotate (quinone route): step 1/1. Catalyzes the conversion of dihydroorotate to orotate with quinone as electron acceptor. This chain is Dihydroorotate dehydrogenase (quinone), found in Mycobacterium bovis (strain BCG / Pasteur 1173P2).